The chain runs to 109 residues: Nucleoid-associated protein ECA1177 (109 aa).

The protein belongs to the YbaB/EbfC family. Homodimer.

The protein localises to the cytoplasm. Its subcellular location is the nucleoid. Binds to DNA and alters its conformation. May be involved in regulation of gene expression, nucleoid organization and DNA protection. This is Nucleoid-associated protein ECA1177 from Pectobacterium atrosepticum (strain SCRI 1043 / ATCC BAA-672) (Erwinia carotovora subsp. atroseptica).